The chain runs to 588 residues: ATP-dependent lipid A-core flippase (588 aa).

A run of 6 helical transmembrane segments spans residues 23-43 (FWPV…IDAG), 56-76 (FITI…IGIT), 141-161 (DALT…TVMM), 162-182 (VICW…GIIV), 257-277 (LVIA…STVI), and 278-298 (TISA…IKPM). The 283-residue stretch at 28-310 (LLGVLANILY…LTTLNATIQR (283 aa)) folds into the ABC transmembrane type-1 domain. Residues 342 to 576 (IEFKHVYHAY…DGHYAQLYKV (235 aa)) enclose the ABC transporter domain. Position 375–382 (375–382 (GHSGSGKT)) interacts with ATP.

The protein belongs to the ABC transporter superfamily. Lipid exporter (TC 3.A.1.106) family. In terms of assembly, homodimer.

The protein localises to the cell inner membrane. It catalyses the reaction ATP + H2O + lipid A-core oligosaccharideSide 1 = ADP + phosphate + lipid A-core oligosaccharideSide 2.. In terms of biological role, involved in lipopolysaccharide (LPS) biosynthesis. Translocates lipid A-core from the inner to the outer leaflet of the inner membrane. Transmembrane domains (TMD) form a pore in the inner membrane and the ATP-binding domain (NBD) is responsible for energy generation. This chain is ATP-dependent lipid A-core flippase, found in Legionella pneumophila (strain Lens).